Consider the following 578-residue polypeptide: Aspartate--tRNA ligase (578 aa).

Position 169 (E169) interacts with L-aspartate. Positions 191 to 194 (QTFK) are aspartate. L-aspartate is bound at residue R213. ATP is bound by residues 213–215 (RDE) and Q222. L-aspartate is bound at residue H440. E474 contacts ATP. R481 contributes to the L-aspartate binding site. Residue 526–529 (GLDR) participates in ATP binding.

Belongs to the class-II aminoacyl-tRNA synthetase family. Type 1 subfamily. As to quaternary structure, homodimer.

It is found in the cytoplasm. It carries out the reaction tRNA(Asp) + L-aspartate + ATP = L-aspartyl-tRNA(Asp) + AMP + diphosphate. Functionally, catalyzes the attachment of L-aspartate to tRNA(Asp) in a two-step reaction: L-aspartate is first activated by ATP to form Asp-AMP and then transferred to the acceptor end of tRNA(Asp). The protein is Aspartate--tRNA ligase of Ureaplasma parvum serovar 3 (strain ATCC 700970).